We begin with the raw amino-acid sequence, 255 residues long: Reaction center protein L chain (255 aa).

3 consecutive transmembrane segments (helical) span residues 12–35, 64–92, and 95–120; these read GFFG…GTAL, GLWQ…RKLG, and LHIP…LLLG. 2 residues coordinate (7R,8Z)-bacteriochlorophyll b: H133 and H153. A helical membrane pass occupies residues 150 to 179; that stretch reads NPAHMIGITFFFTNCMAFGMHGSIILSVLN. H170 provides a ligand contact to Fe cation. A ubiquinone is bound at residue F196. A helical transmembrane segment spans residues 205 to 231; the sequence is GTLGIHRLGVFLAISAAFWSAVCIILS. H210 contributes to the Fe cation binding site.

The protein belongs to the reaction center PufL/M/PsbA/D family. As to quaternary structure, reaction center is composed of four bacteriochlorophylls, two bacteriopheophytins, two ubiquinones, one iron, and three highly hydrophobic polypeptide chains (designated L, M, and H).

Its subcellular location is the cellular chromatophore membrane. In terms of biological role, the reaction center is a membrane-bound complex that mediates the initial photochemical event in the electron transfer process of photosynthesis. In Pararhodospirillum photometricum (Rhodospirillum photometricum), this protein is Reaction center protein L chain (pufL).